The primary structure comprises 232 residues: RNA chaperone ProQ (232 aa).

The tract at residues 105-182 (EAKARVQAQR…REEQHTPVSD (78 aa)) is disordered. Residues 117–136 (QQAKKREAAATAGEKEDAPR) are compositionally biased toward basic and acidic residues. The span at 137–146 (RERKPRPTTP) shows a compositional bias: basic residues. The segment covering 147–177 (RRKEGAERKPRAQKPVEKAPKTVKAPREEQH) has biased composition (basic and acidic residues).

Belongs to the ProQ family.

The protein resides in the cytoplasm. Functionally, RNA chaperone with significant RNA binding, RNA strand exchange and RNA duplexing activities. May regulate ProP activity through an RNA-based, post-transcriptional mechanism. This is RNA chaperone ProQ from Escherichia coli (strain K12).